Consider the following 238-residue polypeptide: Zinc import ATP-binding protein ZnuC (238 aa).

Residues 5–220 enclose the ABC transporter domain; the sequence is ITLKNIHVSF…LEFISIFGLK (216 aa). ATP is bound at residue 37–44; that stretch reads GPNGAGKS.

The protein belongs to the ABC transporter superfamily. Zinc importer (TC 3.A.1.15.5) family. In terms of assembly, the complex is composed of two ATP-binding proteins (ZnuC), two transmembrane proteins (ZnuB) and a solute-binding protein (ZnuA).

It is found in the cell inner membrane. It catalyses the reaction Zn(2+)(out) + ATP(in) + H2O(in) = Zn(2+)(in) + ADP(in) + phosphate(in) + H(+)(in). Functionally, part of the ABC transporter complex ZnuABC involved in zinc import. Responsible for energy coupling to the transport system. The protein is Zinc import ATP-binding protein ZnuC of Buchnera aphidicola subsp. Schizaphis graminum (strain Sg).